The chain runs to 444 residues: Exodeoxyribonuclease 7 large subunit (444 aa).

It belongs to the XseA family. Heterooligomer composed of large and small subunits.

It localises to the cytoplasm. It carries out the reaction Exonucleolytic cleavage in either 5'- to 3'- or 3'- to 5'-direction to yield nucleoside 5'-phosphates.. Bidirectionally degrades single-stranded DNA into large acid-insoluble oligonucleotides, which are then degraded further into small acid-soluble oligonucleotides. The chain is Exodeoxyribonuclease 7 large subunit from Pseudoalteromonas translucida (strain TAC 125).